Consider the following 1072-residue polypeptide: Vacuolar membrane protease (1072 aa).

Topologically, residues 1 to 9 are cytoplasmic; sequence MINPISFRP. The chain crosses the membrane as a helical span at residues 10–30; it reads GPVTFWTTLIYLALLIPIVII. The Vacuolar segment spans residues 31-404; it reads NEKTPAAPKT…SFVLFGLRGM (374 aa). Residues Asn48, Asn116, Asn119, and Asn128 are each glycosylated (N-linked (GlcNAc...) asparagine). Residues His185 and Asp197 each coordinate Zn(2+). Residue Glu231 is the Proton acceptor of the active site. Residues Glu232, Glu257, and His330 each contribute to the Zn(2+) site. The chain crosses the membrane as a helical span at residues 405–425; sequence FAWSLTLLIATPLVLVGITWL. Over 426 to 457 the chain is Cytoplasmic; the sequence is LRNLDKDYFFTSTVKTKEHPEYEAVPIGGWKG. A helical membrane pass occupies residues 458–478; the sequence is FFRFPFALGVAVFFTISSALL. Over 479-492 the chain is Vacuolar; it reads MNKVNPLIVYSSRY. A helical membrane pass occupies residues 493–513; sequence SVWVMMVSIFYFSFWMIMRGA. The Cytoplasmic portion of the chain corresponds to 514-523; it reads NFVRPSALHR. The chain crosses the membrane as a helical span at residues 524 to 544; that stretch reads GYANLWLFVFGWIVLVAVTAL. Over 545–554 the chain is Vacuolar; it reads EDRRRIAAGY. The chain crosses the membrane as a helical span at residues 555–575; it reads IFVFLESAIFLSCLISFVELL. The Cytoplasmic segment spans residues 576-747; it reads AVPRKSSYAL…YDHEQEWSGH (172 aa). The segment at 593 to 713 is disordered; it reads GQEHDHNGYQ…GTNDRGRTTF (121 aa). Positions 606-617 are enriched in basic and acidic residues; sequence DSTDEPSLRARA. Residues 643 to 661 are compositionally biased toward polar residues; it reads GTTNGLSTAPSVAAHSSQP. Residues 748 to 768 traverse the membrane as a helical segment; that stretch reads LPSWAWFFQFLLLGPFMIILA. At 769–789 the chain is on the vacuolar side; it reads AQTGLMLTDAVYQTGSDGSKL. Residues 790–810 traverse the membrane as a helical segment; sequence ITPYLIIFVFTVLLILPLTPF. Residues 811–817 lie on the Cytoplasmic side of the membrane; it reads IHRVTHH. A helical membrane pass occupies residues 818–838; it reads IPVFLLVVFIVTLTYNLIAFP. At 839 to 1072 the chain is on the vacuolar side; that stretch reads FSANNRYKTF…VEGRKAFKIV (234 aa). N-linked (GlcNAc...) asparagine glycosylation is found at Asn932 and Asn974.

The protein belongs to the peptidase M28 family. The cofactor is Zn(2+).

The protein resides in the vacuole membrane. Functionally, may be involved in vacuolar sorting and osmoregulation. The chain is Vacuolar membrane protease from Neurospora crassa (strain ATCC 24698 / 74-OR23-1A / CBS 708.71 / DSM 1257 / FGSC 987).